A 329-amino-acid chain; its full sequence is DNA-directed RNA polymerase subunit alpha (329 aa).

The segment at 1–235 (MQGSVIEFLK…EQLDAFVDLR (235 aa)) is alpha N-terminal domain (alpha-NTD). Residues 249–329 (FDPILLRPVD…NWPPASIAED (81 aa)) form an alpha C-terminal domain (alpha-CTD) region.

It belongs to the RNA polymerase alpha chain family. As to quaternary structure, homodimer. The RNAP catalytic core consists of 2 alpha, 1 beta, 1 beta' and 1 omega subunit. When a sigma factor is associated with the core the holoenzyme is formed, which can initiate transcription.

The catalysed reaction is RNA(n) + a ribonucleoside 5'-triphosphate = RNA(n+1) + diphosphate. DNA-dependent RNA polymerase catalyzes the transcription of DNA into RNA using the four ribonucleoside triphosphates as substrates. This Haemophilus ducreyi (strain 35000HP / ATCC 700724) protein is DNA-directed RNA polymerase subunit alpha.